The sequence spans 341 residues: MNLSEELDSIYQEAIQKIGSSISEEDLDKNKNDFIGKKGKLTAVLKNVALLSIEEKKTIGQKANELSKKLENFVVETKSSLKKKLFETQAASEFFDSLRPLPNASNGSLHPITQIQYEIEDIFTSMGFSIMDGPEIETDTNNFGALNFTDDHPAREMQDTFYLENGNLLRTHTSAIQVRTLRKLKPPFRIIAPGRVFRYEEVDASHEHTFYQIEGMVVGKDISAANLIDTMQVLLSRIFEKEIKTRLRPGYFPFVEPGFELDINCLVCEGKGCPVCKQSGWLELLPCGLIHPNVLSHAGLDPKEWTGFAFGLGLDRLVMMRYGIHDIRYFQSGNLRFLKQF.

Glutamate 256 contributes to the Mg(2+) binding site.

It belongs to the class-II aminoacyl-tRNA synthetase family. Phe-tRNA synthetase alpha subunit type 1 subfamily. In terms of assembly, tetramer of two alpha and two beta subunits. It depends on Mg(2+) as a cofactor.

Its subcellular location is the cytoplasm. It catalyses the reaction tRNA(Phe) + L-phenylalanine + ATP = L-phenylalanyl-tRNA(Phe) + AMP + diphosphate + H(+). This is Phenylalanine--tRNA ligase alpha subunit from Leptospira borgpetersenii serovar Hardjo-bovis (strain JB197).